We begin with the raw amino-acid sequence, 126 residues long: MSDPRYQIDVSVVTRYLKEQSDPENSRFAFAYTITVQNNGSLSAKLLSRHWLITNGDGEVEEVRGAGVVGQQPNIDPGQSHTYSSGAVISTRVGTMQGSYQMFAEDGKRFDAEIAPFRLAVPGALH.

One can recognise an ApaG domain in the interval 2 to 126; that stretch reads SDPRYQIDVS…FRLAVPGALH (125 aa).

This is Protein ApaG from Pseudomonas putida (strain ATCC 700007 / DSM 6899 / JCM 31910 / BCRC 17059 / LMG 24140 / F1).